Consider the following 439-residue polypeptide: MKLANWYWLSSAVLATYGFLVVANNETEEIKDERAKDVCPVRLESRGKCEEAGECPYQVSLPPLTIQLPKQFSRIEEVFKEVQNLKEIVNSLKKSCQDCKLQADDNGDPGRNGLLLPSTGAPGEVGDNRVRELESEVNKLSSELKNAKEEINVLHGRLEKLNLVNMNNIENYVDSKVANLTFVVNSLDGKCSKCPSQEQIQSRPVQHLIYKDCSDYYAIGKRSSETYRVTPDPKNSSFEVYCDMETMGGGWTVLQARLDGSTNFTRTWQDYKAGFGNLRREFWLGNDKIHLLTKSKEMILRIDLEDFNGVELYALYDQFYVANEFLKYRLHVGNYNGTAGDALRFNKHYNHDLKFFTTPDKDNDRYPSGNCGLYYSSGWWFDACLSANLNGKYYHQKYRGVRNGIFWGTWPGVSEAHPGGYKSSFKEAKMMIRPKHFKP.

The first 23 residues, 1–23 (MKLANWYWLSSAVLATYGFLVVA), serve as a signal peptide directing secretion. N-linked (GlcNAc...) asparagine glycosylation occurs at Asn-25. A coiled-coil region spans residues 73 to 165 (SRIEEVFKEV…GRLEKLNLVN (93 aa)). The segment at 103–126 (ADDNGDPGRNGLLLPSTGAPGEVG) is disordered. Asn-179, Asn-235, Asn-263, and Asn-336 each carry an N-linked (GlcNAc...) asparagine glycan. The 233-residue stretch at 204–436 (PVQHLIYKDC…EAKMMIRPKH (233 aa)) folds into the Fibrinogen C-terminal domain. A disulfide bridge connects residues Cys-213 and Cys-242. Residues Cys-371 and Cys-384 are joined by a disulfide bond.

In terms of assembly, homotetramer; disulfide-linked. Constitutively expressed in cytotoxic T-cells.

Its subcellular location is the secreted. In terms of biological role, may play a role in physiologic lymphocyte functions at mucosal sites. This is Fibroleukin (FGL2) from Homo sapiens (Human).